We begin with the raw amino-acid sequence, 430 residues long: 5-methylthioadenosine/S-adenosylhomocysteine deaminase (430 aa).

Zn(2+) contacts are provided by H59 and H61. Positions 88 and 181 each coordinate substrate. H208 provides a ligand contact to Zn(2+). E211 and D296 together coordinate substrate. D296 is a Zn(2+) binding site.

This sequence belongs to the metallo-dependent hydrolases superfamily. MTA/SAH deaminase family. The cofactor is Zn(2+).

The enzyme catalyses S-adenosyl-L-homocysteine + H2O + H(+) = S-inosyl-L-homocysteine + NH4(+). It catalyses the reaction S-methyl-5'-thioadenosine + H2O + H(+) = S-methyl-5'-thioinosine + NH4(+). Functionally, catalyzes the deamination of 5-methylthioadenosine and S-adenosyl-L-homocysteine into 5-methylthioinosine and S-inosyl-L-homocysteine, respectively. Is also able to deaminate adenosine. The sequence is that of 5-methylthioadenosine/S-adenosylhomocysteine deaminase from Aquifex aeolicus (strain VF5).